A 274-amino-acid chain; its full sequence is Oxidoreductase stcQ (274 aa).

It belongs to the avfA family.

The protein operates within mycotoxin biosynthesis; sterigmatocystin biosynthesis. Oxidoreductase; part of the gene cluster that mediates the biosynthesis of sterigmatocystin (ST), a polyketide-derived furanocoumarin which is part of the most toxic and carcinogenic compounds among the known mycotoxins. The first step in the biosynthesis of sterigmatocystin is the production of hexanoate by the fatty acid synthase (FAS) units stcJ and stcK. The polyketide backbone is assembled by the non-reducing polyketide synthase stcA by condensation of the starter hexanoyl-CoA and 7 malonyl-CoA extender units followed by cyclization and release of norsolorinic acid. Norsolorinic acid is the first stable intermediate in the biosynthesis of sterigmatocystin and is converted into averantin (AVN) by the ketoreductase stcE which reduces the hexanoate ketone to an alcohol. Averantin is then oxidized into 5'-hydroxyaverantin (HAVN) by the cytochrome P450 monooxygenase stcF. 5'-hydroxyaverantin is further converted to 5'-oxyaverantin (OAVN) by the 5'-hydroxyaverantin dehydrogenase stcG. The next step is the conversion of OAVN into averufin (AVF) which is catalyzed by a yet to be identified enzyme. The cytochrome P450 monooxygenase stcB and the flavin-binding monooxygenase stcW are both required for the conversion of averufin to 1-hydroxyversicolorone. The esterase stcI probably catalyzes the formation of versiconal hemiacetal acetate from 1-hydroxyversicolorone. The oxydoreductase stcN then probably catalyzes the biosynthetic step from versiconal to versicolorin B (VERB). The next step is performed by the versicolorin B desaturase stcL to produce versicolorin A (VERA). The ketoreductase stcU and the cytochrome P450 monooxygenase stcS are involved in the conversion of versicolorin A to demethylsterigmatocystin. The Baeyer-Villiger oxidas stcQ and the reductase stcR might be involved in the biosynthetic step from versicolorin A to demethylsterigmatocystin. The final step in the biosynthesis of sterigmatocystin is the methylation of demethylsterigmatocystin catalyzed by the methyltransferase stcP. This chain is Oxidoreductase stcQ, found in Emericella nidulans (strain FGSC A4 / ATCC 38163 / CBS 112.46 / NRRL 194 / M139) (Aspergillus nidulans).